The primary structure comprises 269 residues: Shikimate dehydrogenase (NADP(+)) (269 aa).

Shikimate is bound by residues 17 to 19 (SKS) and threonine 64. The Proton acceptor role is filled by lysine 68. Aspartate 80 lines the NADP(+) pocket. 2 residues coordinate shikimate: asparagine 89 and aspartate 105. NADP(+) is bound by residues 130–134 (GAGGA), 154–159 (NRTHAK), and methionine 213. Tyrosine 215 lines the shikimate pocket. Residue glycine 237 participates in NADP(+) binding.

It belongs to the shikimate dehydrogenase family. As to quaternary structure, homodimer.

The catalysed reaction is shikimate + NADP(+) = 3-dehydroshikimate + NADPH + H(+). It functions in the pathway metabolic intermediate biosynthesis; chorismate biosynthesis; chorismate from D-erythrose 4-phosphate and phosphoenolpyruvate: step 4/7. Involved in the biosynthesis of the chorismate, which leads to the biosynthesis of aromatic amino acids. Catalyzes the reversible NADPH linked reduction of 3-dehydroshikimate (DHSA) to yield shikimate (SA). This Neisseria polysaccharea protein is Shikimate dehydrogenase (NADP(+)).